We begin with the raw amino-acid sequence, 122 residues long: Protein TCL1B3 (122 aa).

Belongs to the TCL1 family.

This is Protein TCL1B3 (Tcl1b3) from Mus musculus (Mouse).